The sequence spans 378 residues: Putative glutamate--cysteine ligase 2 (378 aa).

It belongs to the glutamate--cysteine ligase type 2 family. YbdK subfamily.

It carries out the reaction L-cysteine + L-glutamate + ATP = gamma-L-glutamyl-L-cysteine + ADP + phosphate + H(+). Its function is as follows. ATP-dependent carboxylate-amine ligase which exhibits weak glutamate--cysteine ligase activity. This chain is Putative glutamate--cysteine ligase 2, found in Jannaschia sp. (strain CCS1).